Here is a 181-residue protein sequence, read N- to C-terminus: ADP-ribosylation factor 1-like 2 (181 aa).

Glycine 2 carries N-myristoyl glycine lipidation. The tract at residues 3–16 (NVFGSLFKGLFGKR) is important for the stable binding to the membranes. Residues 24–32 (GLDAAGKTT), 126–129 (NKQD), and alanine 160 each bind GTP.

Belongs to the small GTPase superfamily. Arf family. In terms of tissue distribution, expressed in hypodermis, intestine, spermatheca, uterus, gonadal sheath, vulva cells, pharynx muscle, body wall muscle, head neurons, ventral nerve cord.

Its subcellular location is the golgi apparatus membrane. The catalysed reaction is GTP + H2O = GDP + phosphate + H(+). Alternates between an inactive GDP-bound form and an active GTP-bound form. Activated by a guanine nucleotide-exchange factor (GEF) and inactivated by GTPase-activating protein (GAP). Its function is as follows. Small GTPase involved in protein trafficking between different compartments. Modulates vesicle budding and uncoating within the Golgi complex. In its GTP-bound form, triggers the recruitment of coatomer proteins to the Golgi membrane. The hydrolysis of ARF1-bound GTP, which is mediated by ARFGAPs proteins, is required for dissociation of coat proteins from Golgi membranes and vesicles. Involved in endoplasmic reticulum dynamics during embryogenesis. Also required for adult germline function. Plays a role in cell shedding during embryogenesis probably by promoting the endocytosis of cell adhesion molecules. During neurogenesis, involved in cell autonomous Q.p neuroblast asymmetric divisions that generate one precursor cell and one apoptotic cell, probably by controlling endocytosis. Plays a role in maintaining mitochondrial morphology. This chain is ADP-ribosylation factor 1-like 2, found in Caenorhabditis elegans.